An 818-amino-acid chain; its full sequence is H(+)/Cl(-) exchange transporter 3 (818 aa).

The Cytoplasmic segment spans residues 1-125; the sequence is MESEQLFHRG…WEMTKSLYDA (125 aa). A Di-leucine internalization motif; mediates targeting to late endosome and lysosome membranes motif is present at residues 13–17; it reads RNSYN. The IP motif; mediates targeting to recycling endosomes signature appears at 18–19; sequence SI. 3 consecutive short sequence motifs (di-leucine internalization motif; mediates targeting to late endosome and lysosome membranes) follow at residues 28-29, 46-47, and 71-75; these read LL and LLDLL. Residues 126–163 form a helical membrane-spanning segment; that stretch reads WSGWLVVTLTGLASGALAGLIDIAADWMTDLKEGICLS. N-linked (GlcNAc...) asparagine glycosylation occurs at Asn177. A helical transmembrane segment spans residues 209–232; sequence MNYIMYIFWALSFAFLAVSLVKVF. The short motif at 238–242 is the Selectivity filter part_1 element; the sequence is GSGIP. Ser239 contributes to the chloride binding site. Residues 241–248 constitute an intramembrane region (helical); sequence IPEIKTIL. Transmembrane regions (helical) follow at residues 258–276 and 282–301; these read GKWT…VASG and EGPL…YLFP. A Selectivity filter part_2 motif is present at residues 280–284; the sequence is GKEGP. 2 consecutive intramembrane regions (helical) follow at residues 313–325 and 329–337; these read VLSA…VSVA and PIGGVLFSL. The next 3 helical transmembrane spans lie at 349-367, 391-416, and 423-443; these read LWRS…RSIN, FPFI…AWCR, and FGKY…VIAF. Asn451 and Asn479 each carry an N-linked (GlcNAc...) asparagine glycan. Helical transmembrane passes span 500–520 and 525–544; these read IWQL…TFGI and GLFI…VGIA. Residues 525–529 carry the Selectivity filter part_3 motif; that stretch reads GLFIP. Phe527 is a chloride binding site. Intramembrane regions (helical) lie at residues 572 to 586 and 590 to 601; these read GLYA…LGGV and TVSLVVIVFELT. Residues 602–605 constitute an intramembrane region (note=Loop between two helices); sequence GGLE. Residues 606 to 624 form a helical membrane-spanning segment; sequence YIVPLMAAVMTSKWVGDAF. Residues 625 to 818 lie on the Cytoplasmic side of the membrane; the sequence is GREGIYEAHI…NQDPASIMFN (194 aa). Tyr630 contacts chloride. 2 consecutive CBS domains span residues 658 to 722 and 755 to 812; these read MRPR…ARKK and LDMS…NQDP. ATP contacts are provided by residues 689–691 and 796–799; these read YNG and TKKD.

It belongs to the chloride channel (TC 2.A.49) family. ClC-3/CLCN3 subfamily. In terms of assembly, monomer and homodimer. Forms heterodimers with CLCN4. N-glycosylated. Detected in kidney, in the apical part of proximal tubule cells (at protein level). Expressed at high levels in the kidney while a low level expression is seen in the brain. Within the brain, it is prominent in the hippocampus, cerebral cortex and olfactory bulb. As to expression, brain, pancreas, kidney, liver, lung, retina, olfactory bulb, and spinal cord. In terms of tissue distribution, pancreas, kidney, liver, lung and retina. Brain, heart, pancreas, kidney, liver, lung, retina, olfactory bulb, and spinal cord. As to expression, expressed at high levels in the liver and at low levels in the brain.

It localises to the cytoplasmic vesicle. Its subcellular location is the secretory vesicle membrane. It is found in the lysosome membrane. The protein resides in the late endosome membrane. The protein localises to the cell membrane. It localises to the early endosome membrane. Its subcellular location is the recycling endosome membrane. With respect to regulation, inhibited by Cd(2+). In terms of biological role, may influence large dense-core vesicle exocytosis in adrenal chromaffin cells. Its function is as follows. Strongly outwardly rectifying, electrogenic H(+)/Cl(-)exchanger which mediates the exchange of chloride ions against protons. The CLC channel family contains both chloride channels and proton-coupled anion transporters that exchange chloride or another anion for protons. The presence of conserved gating glutamate residues is typical for family members that function as antiporters. Strongly outwardly rectifying, electrogenic H(+)/Cl(-)exchanger which mediates the exchange of chloride ions against protons. Facilitates endosomal acidification and chloride accumulation in hepatocytes. Functionally, strongly outwardly rectifying, electrogenic H(+)/Cl(-)exchanger which mediates the exchange of chloride ions against protons. This Mus musculus (Mouse) protein is H(+)/Cl(-) exchange transporter 3 (Clcn3).